We begin with the raw amino-acid sequence, 216 residues long: uncharacterized protein (216 aa).

Belongs to the channel forming colicin family.

This is an uncharacterized protein from Escherichia coli.